The chain runs to 245 residues: Acetylglutamate kinase (245 aa).

Substrate-binding positions include 41–42 (GG), Arg-63, and Asn-156.

The protein belongs to the acetylglutamate kinase family. ArgB subfamily.

The protein resides in the cytoplasm. It catalyses the reaction N-acetyl-L-glutamate + ATP = N-acetyl-L-glutamyl 5-phosphate + ADP. It functions in the pathway amino-acid biosynthesis; L-arginine biosynthesis; N(2)-acetyl-L-ornithine from L-glutamate: step 2/4. Catalyzes the ATP-dependent phosphorylation of N-acetyl-L-glutamate. The chain is Acetylglutamate kinase from Streptococcus mutans serotype c (strain ATCC 700610 / UA159).